Reading from the N-terminus, the 424-residue chain is Lactate racemase (424 aa).

A Ni(II)-pyridinium-3,5-bisthiocarboxylate mononucleotide-binding site is contributed by 72–75 (DHTR). Active-site proton donor/acceptor residues include His-108 and His-174. Lys-184 and His-200 together coordinate Ni(II)-pyridinium-3,5-bisthiocarboxylate mononucleotide. Positions 295 and 298 each coordinate substrate.

The protein belongs to the lactate racemase family. Homodimer. It depends on Ni(II)-pyridinium-3,5-bisthiocarboxylate mononucleotide as a cofactor.

It catalyses the reaction (S)-lactate = (R)-lactate. Activation of the apo-enzyme requires the three accessory proteins LarB, LarE and LarC, that are involved in the biosynthesis of the nickel-pincer cofactor of LarA. Inhibited by sulfite that behaves as a mixed inhibitor. In terms of biological role, catalyzes the interconversion between the D- and L-isomers of lactate. May act as a rescue enzyme to ensure D-lactate production in physiological conditions where its production by the D-lactate dehydrogenase LdhD is not sufficient. D-Lactate is absolutely required for growth of L.plantarum and is an essential component of the cell wall peptidoglycan in this species, where it is incorporated as the last residue of the muramoyl-pentadepsipeptide peptidoglycan precursor; its incorporation confers high level of vancomycin resistance. This chain is Lactate racemase, found in Lactiplantibacillus plantarum (strain ATCC BAA-793 / NCIMB 8826 / WCFS1) (Lactobacillus plantarum).